A 406-amino-acid polypeptide reads, in one-letter code: Probable 2,3-bisphosphoglycerate-independent phosphoglycerate mutase (406 aa).

This sequence belongs to the BPG-independent phosphoglycerate mutase family. A-PGAM subfamily.

It catalyses the reaction (2R)-2-phosphoglycerate = (2R)-3-phosphoglycerate. It participates in carbohydrate degradation; glycolysis; pyruvate from D-glyceraldehyde 3-phosphate: step 3/5. Catalyzes the interconversion of 2-phosphoglycerate and 3-phosphoglycerate. The protein is Probable 2,3-bisphosphoglycerate-independent phosphoglycerate mutase of Thermus thermophilus (strain ATCC BAA-163 / DSM 7039 / HB27).